A 439-amino-acid chain; its full sequence is Probable threonine protease PRSS50 (439 aa).

Disordered regions lie at residues 1–22 and 48–130; these read MEPW…VPGA and ERIR…TMAP. Positions 1-47 are cleaved as a signal peptide; sequence MEPWCGAEVRGQGPQGPRVPGASRSRSRALLLLLLLLLLLLPRRPAG. The span at 9–21 shows a compositional bias: low complexity; that stretch reads VRGQGPQGPRVPG. The Extracellular segment spans residues 48–415; it reads ERIRPRRPPR…WIWDRLSGEP (368 aa). The span at 51–61 shows a compositional bias: basic residues; it reads RPRRPPRHAHP. The segment covering 112–127 has biased composition (low complexity); sequence QAQTNQTTTAPPNSQT. N-linked (GlcNAc...) asparagine glycosylation is found at N116 and N187. The 256-residue stretch at 157 to 412 folds into the Peptidase S1 domain; it reads FCGSSHEPDP…YRPWIWDRLS (256 aa). A disulfide bridge connects residues C192 and C208. H207 serves as the catalytic Charge relay system. N-linked (GlcNAc...) asparagine glycosylation is present at N226. D260 (charge relay system) is an active-site residue. Intrachain disulfides connect C294-C370, C327-C350, and C360-C388. The active-site Charge relay system is the T364. A helical transmembrane segment spans residues 416-436; the sequence is LALPAPSRTLLLAFLLLLILL. The Cytoplasmic segment spans residues 437-439; the sequence is GTL.

This sequence belongs to the peptidase S1 family.

The protein localises to the membrane. In terms of biological role, may be involved in proteolysis through its threonine endopeptidase activity. This Mus musculus (Mouse) protein is Probable threonine protease PRSS50 (Prss50).